The primary structure comprises 249 residues: Enolase-phosphatase E1 (249 aa).

Asp14 and Glu16 together coordinate Mg(2+). Residues 141-142 (SS) and Lys175 contribute to the substrate site. Asp200 is a Mg(2+) binding site.

It belongs to the HAD-like hydrolase superfamily. MasA/MtnC family. Monomer. Mg(2+) is required as a cofactor.

It localises to the cytoplasm. The protein localises to the nucleus. The enzyme catalyses 5-methylsulfanyl-2,3-dioxopentyl phosphate + H2O = 1,2-dihydroxy-5-(methylsulfanyl)pent-1-en-3-one + phosphate. It functions in the pathway amino-acid biosynthesis; L-methionine biosynthesis via salvage pathway; L-methionine from S-methyl-5-thio-alpha-D-ribose 1-phosphate: step 3/6. It participates in amino-acid biosynthesis; L-methionine biosynthesis via salvage pathway; L-methionine from S-methyl-5-thio-alpha-D-ribose 1-phosphate: step 4/6. In terms of biological role, bifunctional enzyme that catalyzes the enolization of 2,3-diketo-5-methylthiopentyl-1-phosphate (DK-MTP-1-P) into the intermediate 2-hydroxy-3-keto-5-methylthiopentenyl-1-phosphate (HK-MTPenyl-1-P), which is then dephosphorylated to form the acireductone 1,2-dihydroxy-3-keto-5-methylthiopentene (DHK-MTPene). In Drosophila virilis (Fruit fly), this protein is Enolase-phosphatase E1.